The sequence spans 179 residues: MGLIFAKLWSLFCNQEHKVIIVGLDNAGKTTILYQFLMNEVVHTSPTIGSNVEEIVVKNTHFLMWDIGGQESLRSSWNTYYSNTEFIILVVDSIDRERLAITKEELYRMLAHEDLRKAAVLIFANKQDMKGCMTAAEISKYLTLSSIKDHPWHIQSCCALTGEGLCQGLEWMTSRIGVR.

Glycine 2 carries the N-myristoyl glycine lipid modification. GTP-binding positions include 23-30, 66-70, 125-128, and alanine 159; these read GLDNAGKT, DIGGQ, and NKQD.

It belongs to the small GTPase superfamily. Arf family.

Binds and exchanges GTP and GDP. The protein is ADP-ribosylation factor-like protein 5B (Arl5b) of Mus musculus (Mouse).